Consider the following 519-residue polypeptide: ATP synthase subunit alpha 1 (519 aa).

172–179 (GDRQTGKT) is a binding site for ATP.

It belongs to the ATPase alpha/beta chains family. In terms of assembly, F-type ATPases have 2 components, CF(1) - the catalytic core - and CF(0) - the membrane proton channel. CF(1) has five subunits: alpha(3), beta(3), gamma(1), delta(1), epsilon(1). CF(0) has three main subunits: a(1), b(2) and c(9-12). The alpha and beta chains form an alternating ring which encloses part of the gamma chain. CF(1) is attached to CF(0) by a central stalk formed by the gamma and epsilon chains, while a peripheral stalk is formed by the delta and b chains.

The protein localises to the cell inner membrane. It catalyses the reaction ATP + H2O + 4 H(+)(in) = ADP + phosphate + 5 H(+)(out). Produces ATP from ADP in the presence of a proton gradient across the membrane. The alpha chain is a regulatory subunit. In Psychromonas ingrahamii (strain DSM 17664 / CCUG 51855 / 37), this protein is ATP synthase subunit alpha 1.